The chain runs to 200 residues: MKIYSIAILRNSGNKALELCSAKDLSQFGFFERNGVSQFMTFFGETVAGRTGAGQRQSIEEGNYVGHVYSRSEGLCGVLITDKEYPVRPAYTLLNKVLDEYLVAHPPAEWRDIAQTSDQLKLRELEMYLAKYQDPSQADSIMRVQQELDETKIVLHKTIESVLQRGEKLDNLVDKSESLSASSRMFYKQAKKTNSCCLIM.

One can recognise a Longin domain in the interval 7 to 126; the sequence is AILRNSGNKA…SDQLKLRELE (120 aa). A v-SNARE coiled-coil homology domain is found at 140–200; it reads SIMRVQQELD…KKTNSCCLIM (61 aa). Cys-196 carries the S-palmitoyl cysteine lipid modification. A Cysteine methyl ester modification is found at Cys-197. Residue Cys-197 is the site of S-farnesyl cysteine attachment. The propeptide at 198-200 is removed in mature form; it reads LIM.

The protein belongs to the synaptobrevin family.

The protein resides in the cell membrane. The sequence is that of Synaptobrevin homolog YKT6 (YKT6) from Eremothecium gossypii (strain ATCC 10895 / CBS 109.51 / FGSC 9923 / NRRL Y-1056) (Yeast).